Reading from the N-terminus, the 93-residue chain is MIGKEATIPEVVLELQELVQPTADLHCYEELTEEPAEEEQCLTPYKIVAGCGCGARLRLYVLATNLGIRAQQELLLGDIQLVCPECRGRLRHE.

Positions 1-43 (MIGKEATIPEVVLELQELVQPTADLHCYEELTEEPAEEEQCLT) are E7 terminal domain. Residues 25–29 (LHCYE) carry the LXCXE motif; interaction with host RB1 and TMEM173/STING motif. Residues 51–86 (CGCGARLRLYVLATNLGIRAQQELLLGDIQLVCPEC) fold into a zinc finger. The Nuclear export signal signature appears at 68 to 76 (IRAQQELLL).

It belongs to the papillomaviridae E7 protein family. In terms of assembly, homodimer. Homooligomer. Interacts with host RB1; this interaction induces dissociation of RB1-E2F1 complex thereby disrupting RB1 activity. Interacts with host EP300; this interaction represses EP300 transcriptional activity. Interacts with protein E2; this interaction inhibits E7 oncogenic activity. Interacts with host TMEM173/STING; this interaction impairs the ability of TMEM173/STING to sense cytosolic DNA and promote the production of type I interferon (IFN-alpha and IFN-beta). Post-translationally, highly phosphorylated.

The protein resides in the host cytoplasm. It localises to the host nucleus. Its function is as follows. Plays a role in viral genome replication by driving entry of quiescent cells into the cell cycle. Stimulation of progression from G1 to S phase allows the virus to efficiently use the cellular DNA replicating machinery to achieve viral genome replication. E7 protein has both transforming and trans-activating activities. Induces the disassembly of the E2F1 transcription factor from RB1, with subsequent transcriptional activation of E2F1-regulated S-phase genes. Interferes with host histone deacetylation mediated by HDAC1 and HDAC2, leading to transcription activation. Also plays a role in the inhibition of both antiviral and antiproliferative functions of host interferon alpha. Interaction with host TMEM173/STING impairs the ability of TMEM173/STING to sense cytosolic DNA and promote the production of type I interferon (IFN-alpha and IFN-beta). This is Protein E7 from Human papillomavirus 9.